The chain runs to 211 residues: Probable GTP-binding protein EngB (211 aa).

Residues 26–200 enclose the EngB-type G domain; the sequence is SGIEIAFAGR…RQKLDDWFAA (175 aa). GTP is bound by residues 34–41, 61–65, 79–82, 146–149, and 179–181; these read GRSNAGKS, GRTRL, DLPG, TKAD, and FSS. Mg(2+)-binding residues include Ser-41 and Thr-63.

It belongs to the TRAFAC class TrmE-Era-EngA-EngB-Septin-like GTPase superfamily. EngB GTPase family. It depends on Mg(2+) as a cofactor.

Its function is as follows. Necessary for normal cell division and for the maintenance of normal septation. In Sodalis glossinidius (strain morsitans), this protein is Probable GTP-binding protein EngB.